Consider the following 427-residue polypeptide: UPF0597 protein FN1147 (427 aa).

This sequence belongs to the UPF0597 family.

The chain is UPF0597 protein FN1147 from Fusobacterium nucleatum subsp. nucleatum (strain ATCC 25586 / DSM 15643 / BCRC 10681 / CIP 101130 / JCM 8532 / KCTC 2640 / LMG 13131 / VPI 4355).